A 1170-amino-acid chain; its full sequence is Type I restriction enzyme EcoKI endonuclease subunit (1170 aa).

The stretch at 143 to 229 (YHQEVLTLKQ…QERKAYHKEI (87 aa)) forms a coiled coil. A DNA-binding region (H-T-H motif) is located at residues 431–450 (NQWFADNPGMSELGLRYYQE). Residues 458 to 639 (KAIVKGQQEI…GEPVYRYTYR (182 aa)) form the Helicase ATP-binding domain. 472–478 (ATGTGKT) is a binding site for ATP. Residues 574–577 (DEAH) carry the DEAH box motif. One can recognise a Helicase C-terminal domain in the interval 714-879 (ELTNYLDPTG…TLVNEITDSE (166 aa)).

Belongs to the HsdR family. In terms of assembly, the type I restriction/modification system is composed of three polypeptides R, M and S. The restriction enzyme has stoichiometry R(2)M(2)S(1). The methyltransferase is composed of M(2)S(1). (Microbial infection) Interacts with Escherichia phage T7 protein Ocr; this interaction leads to the inhibition of the type I bifunctional endonuclease and methyltransferase restriction enzyme R.EcoKI composed of R(2)M(2)S(1). Post-translationally, upon purification after overexpression about one-third has the initiating methionine removed.

It carries out the reaction Endonucleolytic cleavage of DNA to give random double-stranded fragments with terminal 5'-phosphates, ATP is simultaneously hydrolyzed.. In terms of biological role, the subtype A restriction (R) subunit of a type I restriction enzyme that recognizes 5'-AACN(6)GTGC-3' and cleaves a random distance away. The R subunit is required for both endonuclease and ATPase activities but not for modification. Has endonucleolytic activity that requires Mg(2+), ATP and S-adenosyl-L-methionine (SAM); ATP can be replaced by dATP, no tested molecule could substitute for SAM. Generates double-stranded DNA with no nicks, by cutting one strand then the other within a few seconds. Cleaves only non-methylated DNA, hemi-methylated and fully methylated DNA are not substrates. After locating a non-methylated recognition site, the enzyme complex serves as a molecular motor that translocates DNA in an ATP-dependent manner until a collision occurs that triggers cleavage. This chain is Type I restriction enzyme EcoKI endonuclease subunit, found in Escherichia coli (strain K12).